A 460-amino-acid chain; its full sequence is ATP synthase subunit beta (460 aa).

150–157 serves as a coordination point for ATP; it reads GGAGVGKT.

This sequence belongs to the ATPase alpha/beta chains family. In terms of assembly, F-type ATPases have 2 components, CF(1) - the catalytic core - and CF(0) - the membrane proton channel. CF(1) has five subunits: alpha(3), beta(3), gamma(1), delta(1), epsilon(1). CF(0) has three main subunits: a(1), b(2) and c(9-12). The alpha and beta chains form an alternating ring which encloses part of the gamma chain. CF(1) is attached to CF(0) by a central stalk formed by the gamma and epsilon chains, while a peripheral stalk is formed by the delta and b chains.

It localises to the cell inner membrane. It carries out the reaction ATP + H2O + 4 H(+)(in) = ADP + phosphate + 5 H(+)(out). In terms of biological role, produces ATP from ADP in the presence of a proton gradient across the membrane. The catalytic sites are hosted primarily by the beta subunits. In Citrobacter koseri (strain ATCC BAA-895 / CDC 4225-83 / SGSC4696), this protein is ATP synthase subunit beta.